A 283-amino-acid polypeptide reads, in one-letter code: Nucleoid occlusion protein (283 aa).

Residues 148–167 constitute a DNA-binding region (H-T-H motif); that stretch reads EALAQRLGKGQSTIANKLRL.

Belongs to the ParB family.

The protein localises to the cytoplasm. The protein resides in the nucleoid. In terms of biological role, effects nucleoid occlusion by binding relatively nonspecifically to DNA and preventing the assembly of the division machinery in the vicinity of the nucleoid, especially under conditions that disturb the cell cycle. It helps to coordinate cell division and chromosome segregation by preventing the formation of the Z ring through the nucleoid, which would cause chromosome breakage. The chain is Nucleoid occlusion protein from Bacillus licheniformis (strain ATCC 14580 / DSM 13 / JCM 2505 / CCUG 7422 / NBRC 12200 / NCIMB 9375 / NCTC 10341 / NRRL NRS-1264 / Gibson 46).